Reading from the N-terminus, the 65-residue chain is MLCLPXFIILLLLASPAAPNPLQTRXQSNLIRAGPEDANIKTXKRVIISGLXXSILVPLIDAIIG.

Positions 1-19 are cleaved as a signal peptide; sequence MLCLPXFIILLLLASPAAP. Positions 20–43 are excised as a propeptide; sequence NPLQTRXQSNLIRAGPEDANIKTX. At isoleucine 64 the chain carries Isoleucine amide.

This sequence belongs to the conotoxin T superfamily. In terms of tissue distribution, expressed by the venom duct.

The protein localises to the secreted. This is Conotoxin VnMLCL-031 from Conus ventricosus (Mediterranean cone).